Consider the following 174-residue polypeptide: Phospholipase A2-like protein Y52B11A.8 (174 aa).

Residues 1–18 form the signal peptide; that stretch reads MRGLLVATWIFVSVAASA. 2 N-linked (GlcNAc...) asparagine glycosylation sites follow: N49 and N143. The segment at 137–174 is disordered; that stretch reads YEASGPNASTTEESPAEKDDYDYESHVAGLNATPSSST.

The protein belongs to the phospholipase A2 family.

Its subcellular location is the secreted. This is Phospholipase A2-like protein Y52B11A.8 from Caenorhabditis elegans.